Consider the following 455-residue polypeptide: D-arabinitol 4-dehydrogenase (455 aa).

Belongs to the mannitol dehydrogenase family. As to quaternary structure, monomer.

The enzyme catalyses D-arabinitol + NAD(+) = D-xylulose + NADH + H(+). It functions in the pathway carbohydrate metabolism; D-arabinitol metabolism. In Klebsiella pneumoniae, this protein is D-arabinitol 4-dehydrogenase (dalD).